The following is a 132-amino-acid chain: Small ribosomal subunit protein uS8 (132 aa).

The protein belongs to the universal ribosomal protein uS8 family. As to quaternary structure, part of the 30S ribosomal subunit. Contacts proteins S5 and S12.

In terms of biological role, one of the primary rRNA binding proteins, it binds directly to 16S rRNA central domain where it helps coordinate assembly of the platform of the 30S subunit. This chain is Small ribosomal subunit protein uS8, found in Exiguobacterium sibiricum (strain DSM 17290 / CCUG 55495 / CIP 109462 / JCM 13490 / 255-15).